A 479-amino-acid polypeptide reads, in one-letter code: Glycogen synthase (479 aa).

ADP-alpha-D-glucose is bound at residue lysine 15.

This sequence belongs to the glycosyltransferase 1 family. Bacterial/plant glycogen synthase subfamily.

It catalyses the reaction [(1-&gt;4)-alpha-D-glucosyl](n) + ADP-alpha-D-glucose = [(1-&gt;4)-alpha-D-glucosyl](n+1) + ADP + H(+). Its pathway is glycan biosynthesis; glycogen biosynthesis. Functionally, synthesizes alpha-1,4-glucan chains using ADP-glucose. The protein is Glycogen synthase of Roseobacter denitrificans (strain ATCC 33942 / OCh 114) (Erythrobacter sp. (strain OCh 114)).